A 423-amino-acid polypeptide reads, in one-letter code: MSYVIDRRLNGKNKSTVNRQRFLRRYREHIKKAVEEAVSRRSIMDMEHGEQISIPGRDIDEPVLHHGRGGKQTIVHPGNKEFTAGEHIPRPQGGGGGGGRGKAGNSGEGMDEFVFQITQEEFLEFMFEDLELPNLVKRHLTGADTFKTVRAGIANEGNPSRINIVRTLRSAHARRIALTGSSRALLREAQKELDRLRVEEPDNFTDIQEVEQEIERLKARINRLPFLDTFDLKYNLLVKQPNPSSKAVMFCLMDVSGSMTQATKDIAKRFFILLYLFLKRNYERIEVVFIRHHTSAREVDEEEFFYSRETGGTIVSSALKLMQEIMAERYPASDWNIYAAQASDGDNWNDDSPICRDILSKQIMPHVQYYTYVEITPREHQALWYEYERIGDAFPDTFAQQQLVSAGDIYPVFRELFQRRLAT.

Positions 81-108 are disordered; it reads EFTAGEHIPRPQGGGGGGGRGKAGNSGE. Over residues 92–107 the composition is skewed to gly residues; sequence QGGGGGGGRGKAGNSG.

Belongs to the UPF0229 family.

This is UPF0229 protein Pput_0430 from Pseudomonas putida (strain ATCC 700007 / DSM 6899 / JCM 31910 / BCRC 17059 / LMG 24140 / F1).